The chain runs to 313 residues: Acetaldehyde dehydrogenase (313 aa).

15 to 18 (SGNI) is a binding site for NAD(+). Cys-133 functions as the Acyl-thioester intermediate in the catalytic mechanism. NAD(+)-binding positions include 164–172 (SAGPGTRAN) and Asn-289.

It belongs to the acetaldehyde dehydrogenase family.

The enzyme catalyses acetaldehyde + NAD(+) + CoA = acetyl-CoA + NADH + H(+). This is Acetaldehyde dehydrogenase from Rhizobium rhizogenes (strain K84 / ATCC BAA-868) (Agrobacterium radiobacter).